The following is a 156-amino-acid chain: Small ribosomal subunit protein uS7 (156 aa).

This sequence belongs to the universal ribosomal protein uS7 family. Part of the 30S ribosomal subunit. Contacts proteins S9 and S11.

Its function is as follows. One of the primary rRNA binding proteins, it binds directly to 16S rRNA where it nucleates assembly of the head domain of the 30S subunit. Is located at the subunit interface close to the decoding center, probably blocks exit of the E-site tRNA. This is Small ribosomal subunit protein uS7 from Cellvibrio japonicus (strain Ueda107) (Pseudomonas fluorescens subsp. cellulosa).